Here is a 284-residue protein sequence, read N- to C-terminus: MSVPIFRTVKELRAAVADWRRDGLRVGVVPTMGALHEGHLSLVRAALANTDRVIVTLFVNPKQFNNAGDLAAYPRTEKEDAAKLAPLGAHMLYAPDGAEMYPNGFSTTVSVSGVSEGLCGAFRPGHFDGVATVVTKLLLQTGADLAFFGEKDFQQLHVVRRLTRDLDIPTQIIACPTVREADGLALSSRNVRLSADDRRNAPKLAEALFAAAGRLAEGTPVAEVLPNARDAILAAGYQEVEYLELRGEDDLAPLSGLDRPARLLVAAWIGGVRLIDNLPVAQPA.

Residue 32 to 39 (MGALHEGH) coordinates ATP. The active-site Proton donor is histidine 39. Position 63 (glutamine 63) interacts with (R)-pantoate. Glutamine 63 is a beta-alanine binding site. Residue 149-152 (GEKD) participates in ATP binding. Glutamine 155 is a (R)-pantoate binding site. ATP contacts are provided by residues valine 178 and 186-189 (LSSR).

Belongs to the pantothenate synthetase family. Homodimer.

The protein localises to the cytoplasm. The catalysed reaction is (R)-pantoate + beta-alanine + ATP = (R)-pantothenate + AMP + diphosphate + H(+). Its pathway is cofactor biosynthesis; (R)-pantothenate biosynthesis; (R)-pantothenate from (R)-pantoate and beta-alanine: step 1/1. Functionally, catalyzes the condensation of pantoate with beta-alanine in an ATP-dependent reaction via a pantoyl-adenylate intermediate. The protein is Pantothenate synthetase of Chelativorans sp. (strain BNC1).